The primary structure comprises 274 residues: Large ribosomal subunit protein uL2cz/uL2cy (274 aa).

The segment at 225 to 274 is disordered; the sequence is PVDHPHGGGEGRAPIGRKKPVTPWGYPALGRRTRKRKKYSETLILRRRSK.

It belongs to the universal ribosomal protein uL2 family. As to quaternary structure, part of the 50S ribosomal subunit.

The protein resides in the plastid. It localises to the chloroplast. This is Large ribosomal subunit protein uL2cz/uL2cy (rpl2-A) from Crucihimalaya wallichii (Rock-cress).